The primary structure comprises 238 residues: Chromosome partition protein MukE (238 aa).

The disordered stretch occupies residues 206-238 (EESSQSSFDLDENEKLSDISAEEQHELELEGDA). Positions 218-238 (NEKLSDISAEEQHELELEGDA) are enriched in basic and acidic residues.

This sequence belongs to the MukE family. As to quaternary structure, interacts, and probably forms a ternary complex, with MukF and MukB. The complex formation is stimulated by calcium or magnesium.

The protein localises to the cytoplasm. Its subcellular location is the nucleoid. Involved in chromosome condensation, segregation and cell cycle progression. May participate in facilitating chromosome segregation by condensation DNA from both sides of a centrally located replisome during cell division. Probably acts via its interaction with MukB and MukF. The sequence is that of Chromosome partition protein MukE from Aliivibrio salmonicida (strain LFI1238) (Vibrio salmonicida (strain LFI1238)).